The chain runs to 640 residues: Protein SPT10 (640 aa).

The segment at 1–30 is disordered; it reads MLNQHTSSVPDDEHLQMAHQNSSSEVRNEA. The region spanning 121 to 259 is the N-acetyltransferase domain; the sequence is LDYSMDTEAD…AGILKGFDVP (139 aa). A disordered region spans residues 534 to 565; that stretch reads PHLTNNESQDHANPVNRDERDMNHSVPDLDRN. Positions 549-565 are enriched in basic and acidic residues; the sequence is NRDERDMNHSVPDLDRN.

Functionally, required for normal transcription at a number of loci in yeast. Affects transcription at Ty1 elements, at PHO5, STE6 and ADH2. This Saccharomyces cerevisiae (strain ATCC 204508 / S288c) (Baker's yeast) protein is Protein SPT10 (SPT10).